Consider the following 238-residue polypeptide: Probable transcriptional regulatory protein SUB0364 (238 aa).

It belongs to the TACO1 family. YeeN subfamily.

Its subcellular location is the cytoplasm. The sequence is that of Probable transcriptional regulatory protein SUB0364 from Streptococcus uberis (strain ATCC BAA-854 / 0140J).